The following is a 70-amino-acid chain: Peptide Hp1035 (70 aa).

Residues 1 to 23 (MKTQFVILLVALVLFQMFAQSEA) form the signal peptide. Phenylalanine amide is present on phenylalanine 36. Positions 40–70 (GLQDLDMDDLDQLFDGEISQADINFLNQLMR) are excised as a propeptide.

It belongs to the non-disulfide-bridged peptide (NDBP) superfamily. Short antimicrobial peptide (group 4) family. Expressed by the venom gland.

Its subcellular location is the secreted. It is found in the target cell membrane. Amphipathic peptide with antimicrobial activity. This chain is Peptide Hp1035, found in Heterometrus petersii (Asian forest scorpion).